The sequence spans 155 residues: Pathogenesis-related protein STH-2 (155 aa).

The protein belongs to the BetVI family.

This is Pathogenesis-related protein STH-2 (STH-2) from Solanum tuberosum (Potato).